Here is a 143-residue protein sequence, read N- to C-terminus: Mite group 2 allergen Pso o 2 (143 aa).

Positions 1–17 (MMKTLVVLAITLAVVSA) are cleaved as a signal peptide. 3 disulfides stabilise this stretch: C25–C134, C38–C43, and C89–C94.

It belongs to the NPC2 family.

It is found in the secreted. The sequence is that of Mite group 2 allergen Pso o 2 (ALLA) from Psoroptes ovis (Sheep scab mite).